Reading from the N-terminus, the 805-residue chain is Cell division cycle protein 48 homolog (805 aa).

ATP-binding positions include 249 to 256 and 522 to 529; these read GPPGSGKT and GPPGCGKT. Residues 783-805 form a disordered region; that stretch reads GATAAADPFATSNAAADDDDLYS.

This sequence belongs to the AAA ATPase family.

Functionally, probably functions in cell division and growth processes. This Capsicum annuum (Capsicum pepper) protein is Cell division cycle protein 48 homolog (CAFP).